Here is an 85-residue protein sequence, read N- to C-terminus: Large ribosomal subunit protein bL27 (85 aa).

The interval 1–24 (MAHKKAGGSSRNGRDSNSKRLGVK) is disordered.

It belongs to the bacterial ribosomal protein bL27 family.

This chain is Large ribosomal subunit protein bL27, found in Nitrosospira multiformis (strain ATCC 25196 / NCIMB 11849 / C 71).